The primary structure comprises 43 residues: MGFLTDFFSNINFETIAQLTMLAMVLIAGPVVIVLLALQGGDL.

A helical transmembrane segment spans residues 16–36 (IAQLTMLAMVLIAGPVVIVLL).

The protein belongs to the Psb30/Ycf12 family. In terms of assembly, PSII is composed of 1 copy each of membrane proteins PsbA, PsbB, PsbC, PsbD, PsbE, PsbF, PsbH, PsbI, PsbJ, PsbK, PsbL, PsbM, PsbT, PsbX, PsbY, PsbZ, Psb30/Ycf12, peripheral proteins PsbO, CyanoQ (PsbQ), PsbU, PsbV and a large number of cofactors. It forms dimeric complexes.

The protein resides in the cellular thylakoid membrane. A core subunit of photosystem II (PSII), probably helps stabilize the reaction center. This chain is Photosystem II reaction center protein Psb30, found in Trichodesmium erythraeum (strain IMS101).